Consider the following 381-residue polypeptide: Cytochrome b (381 aa).

A run of 4 helical transmembrane segments spans residues 33–53 (FGSLLGICLVIQILTGLFLAM), 77–98 (WLIRNLHANGASMFFMCLFLHV), 113–133 (WNIGVMLLLTVTATAFVGYVL), and 178–198 (FFALHFLLPFVIAGLTLVHLT). Residues His-83 and His-97 each coordinate heme b. Positions 182 and 196 each coordinate heme b. His-201 is a binding site for a ubiquinone. The next 4 helical transmembrane spans lie at 226 to 246 (IKDILGLMFLLLVLLSLALFS), 288 to 308 (LGGVLALLASILILLVIPFLH), 320 to 340 (ISQTLFWILTANLITLTWIGG), and 347 to 367 (FIIIGQPASILYFPLIHHPMP).

This sequence belongs to the cytochrome b family. As to quaternary structure, the cytochrome bc1 complex contains 11 subunits: 3 respiratory subunits (MT-CYB, CYC1 and UQCRFS1), 2 core proteins (UQCRC1 and UQCRC2) and 6 low-molecular weight proteins (UQCRH/QCR6, UQCRB/QCR7, UQCRQ/QCR8, UQCR10/QCR9, UQCR11/QCR10 and a cleavage product of UQCRFS1). This cytochrome bc1 complex then forms a dimer. It depends on heme b as a cofactor.

It localises to the mitochondrion inner membrane. In terms of biological role, component of the ubiquinol-cytochrome c reductase complex (complex III or cytochrome b-c1 complex) that is part of the mitochondrial respiratory chain. The b-c1 complex mediates electron transfer from ubiquinol to cytochrome c. Contributes to the generation of a proton gradient across the mitochondrial membrane that is then used for ATP synthesis. The polypeptide is Cytochrome b (MT-CYB) (Sminthopsis youngsoni (Lesser hairy-footed dunnart)).